The primary structure comprises 178 residues: Fatty-acid and retinol-binding protein 1 (178 aa).

The first 16 residues, 1–16, serve as a signal peptide directing secretion; sequence MYHQLILMALIGVIMA. Residues N44 and N75 are each glycosylated (N-linked (GlcNAc...) asparagine). Coiled coils occupy residues 67–89 and 123–153; these read DAALEALKNKSDKLYQKAVELRN and KLDVEKLKQAARDIIAKYEALNEETKEELKA. The N-linked (GlcNAc...) asparagine glycan is linked to N157.

It belongs to the fatty-acid and retinol-binding protein (FARBP) family. In terms of processing, N-glycosylated.

The protein localises to the secreted. Binds retinol and different fatty acids. The sequence is that of Fatty-acid and retinol-binding protein 1 from Acanthocheilonema viteae (Filarial nematode worm).